The primary structure comprises 94 residues: Small ribosomal subunit protein bS6 (94 aa).

It belongs to the bacterial ribosomal protein bS6 family.

Functionally, binds together with bS18 to 16S ribosomal RNA. The sequence is that of Small ribosomal subunit protein bS6 from Clostridium botulinum (strain Loch Maree / Type A3).